The following is a 230-amino-acid chain: Ribonuclease 3 (230 aa).

One can recognise an RNase III domain in the interval 6–135 (TTELKERYGI…FLGALYLDQK (130 aa)). Glu48 is a Mg(2+) binding site. Asp52 is an active-site residue. Mg(2+) is bound by residues Asp121 and Glu124. Residue Glu124 is part of the active site. Residues 161–230 (DHKTQLQEVL…AERALKSIPQ (70 aa)) enclose the DRBM domain.

The protein belongs to the ribonuclease III family. As to quaternary structure, homodimer. Requires Mg(2+) as cofactor.

It localises to the cytoplasm. The enzyme catalyses Endonucleolytic cleavage to 5'-phosphomonoester.. Functionally, digests double-stranded RNA. Involved in the processing of primary rRNA transcript to yield the immediate precursors to the large and small rRNAs (23S and 16S). Processes some mRNAs, and tRNAs when they are encoded in the rRNA operon. Processes pre-crRNA and tracrRNA of type II CRISPR loci if present in the organism. This is Ribonuclease 3 from Enterococcus faecalis (strain ATCC 700802 / V583).